The following is a 1150-amino-acid chain: MVVTRGDKFAGSSLACKSMIGANKMSGSHLHEVNNSRSHFPQTNWLKVAKAFECIPSLNKFMGSNFLYSLESQKLGRDREMAARSIENIAPVTVQTLARPQIEKAWCTLINLSINNTYLRPGITPAIDNDSTSRTSSTKGSTFKVTSNADGSFCAHNHPEHSQRSVRGTAKSIDSFSSSSVGDNKIIIDKVPRVNYEVRDSVTVTNGMEMPPIKNSAQLARPVEPREVSLGEIDYDDIMEIIDVDQIAMEHCPSTCTKQPSVSKFVDIFTSRREEEQGLPPEICSNCSHGIKLGLCPEASTHVEQMKDTLLAISNEILDNTYDLGPDHVEQLHQKRLLLKKQIQQLEILIHNKERKKSQCLVSIPSHNTQYETPQTTNLEVVYGQTDSPTHVKEQGRCVTDNWNMPRDYLVSKERYDISSGSEEREQSVSEVIDVTDTESSNDKKWTSSDFPWTKNLEVYNKLVFGNHSFRPNQREIINATMSGCDVFVLMPTGGGKSLTYQLPALLCAGITLVISPLVSLIQDQIMNLLQTNISAASLSAGMEWAEQLEILQELSSEKSKYKLLYVTPEKVAKSESLLRHLEILNSRSLLARFVIDEAHCVSQWGHDFRPDYQGLGVLKQKFPNIPMLALTATATTSVKEDVVQALGLVNCVVFRQSFNRPNLWYSVVPKTNKCLEDIDKFIRENHFDECGIIYCLSRMDCEKVTEALRVFGHKAAFYHGSMDPGKRAFVQKQWSKDEINIICATVAFGMGINKPDVRFVIHHSLPKSIEGYHQECGRAGRDGQRSSCVLYYSYTDYIRVKHMISQGGLGQGQMKMGYNCKASSGRMLETNTENLLRMVSYCENEVDCRRFLQLVHLGEKFDSTNCKNTCDNCSSSKILIDKDVTVIARQLVALVKLTGERFSSAHIVEIYRGSLNQSVKRNRQDTLHLHGAGKHLTKSEASRILHYLVTEDILAEGVKKSELYGSVSSLLKVNRSKAASLLSGGQSITMRFPSTIKVSKQSKSTANPAKVPLKQTTLPMAKAAPQDSNLSGILLTALKNLRTDIVKESPDLVMAYHIFGNATLKEISKRLPRTKEELLDINGLGKAKVSKYGDRLLETIDSTINDHYKTRPGSGKRRRDENVNPNVAEDDDPDWSASQSHKKVVKNKK.

Disordered stretches follow at residues 124–143 (TPAIDNDSTSRTSSTKGSTF) and 154–179 (CAHNHPEHSQRSVRGTAKSIDSFSSS). The segment covering 132-142 (TSRTSSTKGST) has biased composition (low complexity). Positions 327 to 361 (DHVEQLHQKRLLLKKQIQQLEILIHNKERKKSQCL) form a coiled coil. A compositionally biased stretch (basic and acidic residues) spans 416-428 (YDISSGSEEREQS). The tract at residues 416–446 (YDISSGSEEREQSVSEVIDVTDTESSNDKKW) is disordered. The Helicase ATP-binding domain occupies 478–653 (INATMSGCDV…VQALGLVNCV (176 aa)). 491 to 498 (MPTGGGKS) serves as a coordination point for ATP. Residues 597–600 (DEAH) carry the DEAH box motif. The Helicase C-terminal domain maps to 678–823 (DIDKFIRENH…QMKMGYNCKA (146 aa)). Residues 1029–1111 (SNLSGILLTA…DSTINDHYKT (83 aa)) form the HRDC domain. Residues 1106–1150 (NDHYKTRPGSGKRRRDENVNPNVAEDDDPDWSASQSHKKVVKNKK) are disordered. Basic residues predominate over residues 1141–1150 (SHKKVVKNKK).

This sequence belongs to the helicase family. RecQ subfamily. Mg(2+) is required as a cofactor. The cofactor is Mn(2+). As to expression, mostly expressed in roots, seedlings, shoots, shoot apical mersitem, flowers, and siliques.

Its subcellular location is the nucleus. The catalysed reaction is Couples ATP hydrolysis with the unwinding of duplex DNA by translocating in the 3'-5' direction.. It catalyses the reaction ATP + H2O = ADP + phosphate + H(+). Functionally, 3'-5' DNA helicase that may play a role in the repair of DNA. Required to promote but not to suppress crossovers. The polypeptide is ATP-dependent DNA helicase Q-like 4B (RECQL4B) (Arabidopsis thaliana (Mouse-ear cress)).